A 186-amino-acid chain; its full sequence is Imidazoleglycerol-phosphate dehydratase (186 aa).

It belongs to the imidazoleglycerol-phosphate dehydratase family.

It localises to the cytoplasm. It catalyses the reaction D-erythro-1-(imidazol-4-yl)glycerol 3-phosphate = 3-(imidazol-4-yl)-2-oxopropyl phosphate + H2O. It functions in the pathway amino-acid biosynthesis; L-histidine biosynthesis; L-histidine from 5-phospho-alpha-D-ribose 1-diphosphate: step 6/9. In Dictyoglomus thermophilum (strain ATCC 35947 / DSM 3960 / H-6-12), this protein is Imidazoleglycerol-phosphate dehydratase.